The primary structure comprises 411 residues: Lissencephaly-1 homolog (411 aa).

Residues 9–41 enclose the LisH domain; it reads QREELNQAIADYLGSNGYADSLETFRKEADLST. Positions 56–83 form a coiled coil; the sequence is TSVIRLQKKVMELEAKLTEAEKEVIEGA. WD repeat units lie at residues 106–147, 148–187, 191–230, 233–272, 275–334, 337–376, and 379–411; these read GHRA…RSLK, GHTD…ECIK, GHDH…CVKT, GHRE…CKVE, DHEH…CLLT, GHDN…CMKT, and AHQH…WECR.

Belongs to the WD repeat LIS1/nudF family.

The protein resides in the cytoplasm. It is found in the cytoskeleton. It localises to the microtubule organizing center. Its subcellular location is the centrosome. Its function is as follows. Positively regulates the activity of the minus-end directed microtubule motor protein dynein. May enhance dynein-mediated microtubule sliding by targeting dynein to the microtubule plus end. Required for several dynein- and microtubule-dependent processes. The polypeptide is Lissencephaly-1 homolog (Drosophila sechellia (Fruit fly)).